Consider the following 177-residue polypeptide: Large ribosomal subunit protein uL6 (177 aa).

The protein belongs to the universal ribosomal protein uL6 family. As to quaternary structure, part of the 50S ribosomal subunit.

Functionally, this protein binds to the 23S rRNA, and is important in its secondary structure. It is located near the subunit interface in the base of the L7/L12 stalk, and near the tRNA binding site of the peptidyltransferase center. The polypeptide is Large ribosomal subunit protein uL6 (Cellvibrio japonicus (strain Ueda107) (Pseudomonas fluorescens subsp. cellulosa)).